The following is an 803-amino-acid chain: Palmitoyl thioesterase CPT1C (803 aa).

The Cytoplasmic segment spans residues 1–52 (MAEAHQAVGFRPSLTSDGAEVELSAPVLQEIYLSGLRSWKRHLSRFWNDFLT). The helical transmembrane segment at 53–75 (GVFPASPLSWLFLFSAIQLAWFL) threads the bilayer. Over 76–103 (QLDPSLGLMEKIKELLPDWGGQHHGLRG) the chain is Lumenal. Residues 104-126 (VLAAALFASCLWGALIFTLHVAL) form a helical membrane-spanning segment. The Cytoplasmic segment spans residues 127–803 (RLLLSYHGWL…SKASMTSTDF (677 aa)). H470 (proton acceptor) is an active-site residue. Position 552–564 (552–564 (GKSFIRRCHLSSD)) interacts with CoA. Y586, S588, and T599 together coordinate (R)-carnitine. Positions 761 to 803 (LFQAGQHFKRRFRGSGKENSRHRCGFLSRQTGASKASMTSTDF) are required for interaction with GRIA1. Residues 772–803 (FRGSGKENSRHRCGFLSRQTGASKASMTSTDF) form a disordered region. The segment covering 788–803 (SRQTGASKASMTSTDF) has biased composition (polar residues).

This sequence belongs to the carnitine/choline acetyltransferase family. In terms of assembly, peripherally associated with AMPAR complex. AMPAR complex consists of an inner core made of 4 pore-forming GluA/GRIA proteins (GRIA1, GRIA2, GRIA3 and GRIA4) and 4 major auxiliary subunits arranged in a twofold symmetry. One of the two pairs of distinct binding sites is occupied either by CNIH2, CNIH3 or CACNG2, CACNG3. The other harbors CACNG2, CACNG3, CACNG4, CACNG8 or GSG1L. This inner core of AMPAR complex is complemented by outer core constituents binding directly to the GluA/GRIA proteins at sites distinct from the interaction sites of the inner core constituents. Outer core constituents include at least PRRT1, PRRT2, CKAMP44/SHISA9, FRRS1L and NRN1. The proteins of the inner and outer core serve as a platform for other, more peripherally associated AMPAR constituents, including CPT1C. Alone or in combination, these auxiliary subunits control the gating and pharmacology of the AMPAR complex and profoundly impact their biogenesis and protein processing. Interacts with SACM1L; the interaction regulates SACM1L phosphatidylinositol-3-phosphatase activity and translocation to endoplasmic reticulum/trans Golgi network in a malonyl-CoA dependent manner. Interacts with ATL1. As to expression, expressed predominantly in brain and testis. Expressed in motor neurons.

The protein localises to the cell projection. It is found in the dendrite. Its subcellular location is the axon. The protein resides in the endoplasmic reticulum membrane. The enzyme catalyses S-hexadecanoyl-L-cysteinyl-[protein] + H2O = L-cysteinyl-[protein] + hexadecanoate + H(+). Functionally, palmitoyl thioesterase specifically expressed in the endoplasmic reticulum of neurons. Modulates the trafficking of the glutamate receptor, AMPAR, to plasma membrane through depalmitoylation of GRIA1. Also regulates AMPR trafficking through the regulation of SACM1L phosphatidylinositol-3-phosphatase activity by interaction in a malonyl-CoA dependent manner. Binds malonyl-CoA and couples malonyl-CoA to ceramide levels, necessary for proper spine maturation and contributing to systemic energy homeostasis and appetite control. Binds to palmitoyl-CoA, but does not have carnitine palmitoyltransferase 1 catalytic activity or at very low levels. The protein is Palmitoyl thioesterase CPT1C of Homo sapiens (Human).